The sequence spans 159 residues: Ribonuclease H (159 aa).

In terms of domain architecture, RNase H type-1 spans 1-145; the sequence is MTHIRAIYTD…CDLIARRLSR (145 aa). Residues D10, E49, D74, and D137 each coordinate Mg(2+).

It belongs to the RNase H family. Monomer. It depends on Mg(2+) as a cofactor.

The protein resides in the cytoplasm. It catalyses the reaction Endonucleolytic cleavage to 5'-phosphomonoester.. In terms of biological role, endonuclease that specifically degrades the RNA of RNA-DNA hybrids. The polypeptide is Ribonuclease H (Thermosynechococcus vestitus (strain NIES-2133 / IAM M-273 / BP-1)).